A 327-amino-acid chain; its full sequence is DNA repair and recombination protein RadA (327 aa).

ATP is bound at residue 113 to 120; the sequence is GEFGSGKS.

It belongs to the eukaryotic RecA-like protein family.

Its function is as follows. Involved in DNA repair and in homologous recombination. Binds and assemble on single-stranded DNA to form a nucleoprotein filament. Hydrolyzes ATP in a ssDNA-dependent manner and promotes DNA strand exchange between homologous DNA molecules. This chain is DNA repair and recombination protein RadA, found in Ignicoccus hospitalis (strain KIN4/I / DSM 18386 / JCM 14125).